The primary structure comprises 205 residues: Enhancer of split mgamma protein (205 aa).

Residues 15–72 (YRKVMKPMLERKRRARINKCLDELKDLMVATLESEGEHVTRLEKADILELTVTHLQKM) form the bHLH domain. In terms of domain architecture, Orange spans 93–126 (FRSGYIHAVNEVSRSLSQLPGMNVSLGTQLMTHL). The short motif at 202–205 (WRPW) is the WRPW motif element.

In terms of assembly, homodimer. Heterodimer with dpn. Might form higher-order oligomers. Transcription repression requires formation of a complex with a corepressor protein (Groucho). In terms of tissue distribution, expressed in sensory organ precursors in the wing, leg and eye imaginal disk.

The protein localises to the nucleus. Transcriptional repressor of genes that require a bHLH protein for their transcription. May serve as a transcriptional regulator of the Achaete-scute complex (AS-C) genes. Contributes to the neural-epidermal lineage decision during early neurogenesis. Part of the Notch signaling pathway, plays a role in neuroblasts proliferation in embryos and larvae. In the larval brain, together with other self-renewal transcriptional repressors such as klu and dpn, required for type II neuroblast self-renewal and for maintaining erm in an inactive state in intermediate neural progenitors (INP) derived from type II neuroblasts. This is Enhancer of split mgamma protein from Drosophila melanogaster (Fruit fly).